A 69-amino-acid chain; its full sequence is MKKNIHPEYKKIFATCSCGYTIPIFSTKSSDMSLDVCSQCHPFYTGKQRTMNKKGRIQRFKKRFNFSEI.

The Zn(2+) site is built by C16, C18, C37, and C40.

It belongs to the bacterial ribosomal protein bL31 family. Type A subfamily. Part of the 50S ribosomal subunit. Requires Zn(2+) as cofactor.

Its function is as follows. Binds the 23S rRNA. The chain is Large ribosomal subunit protein bL31 from Buchnera aphidicola subsp. Cinara cedri (strain Cc).